The chain runs to 262 residues: Putative cysteine-rich repeat secretory protein 24 (262 aa).

An N-terminal signal peptide occupies residues 1–29; sequence MSLSSSVTKHLISASILAIVAMQLPSVHS. Gnk2-homologous domains lie at 39 to 141 and 147 to 259; these read YLHH…SIYT and YKNN…LYPF.

It belongs to the cysteine-rich repeat secretory protein family.

It localises to the secreted. This is Putative cysteine-rich repeat secretory protein 24 (CRRSP24) from Arabidopsis thaliana (Mouse-ear cress).